The following is a 302-amino-acid chain: Ornithine carbamoyltransferase (302 aa).

Carbamoyl phosphate contacts are provided by residues S52–T55, Q79, R103, and H130–Q133. Residues N161, D221, and S225 to M226 contribute to the L-ornithine site. Carbamoyl phosphate-binding positions include C261 to L262 and R289.

This sequence belongs to the aspartate/ornithine carbamoyltransferase superfamily. OTCase family.

Its subcellular location is the cytoplasm. The enzyme catalyses carbamoyl phosphate + L-ornithine = L-citrulline + phosphate + H(+). The protein operates within amino-acid biosynthesis; L-arginine biosynthesis; L-arginine from L-ornithine and carbamoyl phosphate: step 1/3. Reversibly catalyzes the transfer of the carbamoyl group from carbamoyl phosphate (CP) to the N(epsilon) atom of ornithine (ORN) to produce L-citrulline. In Syntrophotalea carbinolica (strain DSM 2380 / NBRC 103641 / GraBd1) (Pelobacter carbinolicus), this protein is Ornithine carbamoyltransferase.